A 422-amino-acid polypeptide reads, in one-letter code: UDP-N-acetylglucosamine 1-carboxyvinyltransferase (422 aa).

Phosphoenolpyruvate is bound at residue 22-23; that stretch reads KN. R94 is a UDP-N-acetyl-alpha-D-glucosamine binding site. C118 functions as the Proton donor in the catalytic mechanism. C118 carries the post-translational modification 2-(S-cysteinyl)pyruvic acid O-phosphothioketal. Residues 123–127, D309, and I331 each bind UDP-N-acetyl-alpha-D-glucosamine; that span reads RPVDL.

The protein belongs to the EPSP synthase family. MurA subfamily.

It is found in the cytoplasm. It carries out the reaction phosphoenolpyruvate + UDP-N-acetyl-alpha-D-glucosamine = UDP-N-acetyl-3-O-(1-carboxyvinyl)-alpha-D-glucosamine + phosphate. It participates in cell wall biogenesis; peptidoglycan biosynthesis. Functionally, cell wall formation. Adds enolpyruvyl to UDP-N-acetylglucosamine. The polypeptide is UDP-N-acetylglucosamine 1-carboxyvinyltransferase (Cereibacter sphaeroides (strain ATCC 17025 / ATH 2.4.3) (Rhodobacter sphaeroides)).